The following is a 425-amino-acid chain: Dihydroorotase (425 aa).

Zn(2+) is bound by residues His61 and His63. Substrate contacts are provided by residues 63 to 65 (HLR) and Asn95. Positions 153, 180, and 233 each coordinate Zn(2+). Asn279 contributes to the substrate binding site. Asp306 lines the Zn(2+) pocket. Residue Asp306 is part of the active site. Position 310 (His310) interacts with substrate.

This sequence belongs to the metallo-dependent hydrolases superfamily. DHOase family. Class I DHOase subfamily. Zn(2+) is required as a cofactor.

The enzyme catalyses (S)-dihydroorotate + H2O = N-carbamoyl-L-aspartate + H(+). It functions in the pathway pyrimidine metabolism; UMP biosynthesis via de novo pathway; (S)-dihydroorotate from bicarbonate: step 3/3. Functionally, catalyzes the reversible cyclization of carbamoyl aspartate to dihydroorotate. The protein is Dihydroorotase of Geobacter sulfurreducens (strain ATCC 51573 / DSM 12127 / PCA).